Reading from the N-terminus, the 364-residue chain is Probable zinc transporter 10 (364 aa).

A signal peptide spans 1-28 (MTKSHVIFSASIALFLLLSISHFPGALS). The Extracellular portion of the chain corresponds to 29–52 (QSNKDCQSKSNYSCIDKNKALDLK). The chain crosses the membrane as a helical span at residues 53–73 (LLSIFSILITSLIGVCLPFFA). The Cytoplasmic portion of the chain corresponds to 74 to 85 (RSIPAFQPEKSH). A helical transmembrane segment spans residues 86-106 (FLIVKSFASGIILSTGFMHVL). Residues 107–125 (PDSFEMLSSPCLNDNPWHK) lie on the Extracellular side of the membrane. The chain crosses the membrane as a helical span at residues 126–146 (FPFAGFVAMMSAVFTLMVDSI). Topologically, residues 147–209 (TTSVFTKSGR…GSYLQLLRYR (63 aa)) are cytoplasmic. Residues 210-230 (ILAIVLELGIVVQSIVIGLSV) traverse the membrane as a helical segment. The Extracellular portion of the chain corresponds to 231–241 (GDTNNTCTIKG). Residues 242–262 (LVAALCFHQMFEGMGLGGCIL) form a helical membrane-spanning segment. At 263-271 (QAEYGWVKK) the chain is on the cytoplasmic side. The helical transmembrane segment at 272 to 292 (AVMAFFFAVTTPFGVVLGMAL) threads the bilayer. Residues 293 to 303 (SKTYKENSPES) are Extracellular-facing. Residues 304-324 (LITVGLLNASSAGLLIYMALV) traverse the membrane as a helical segment. Residues 325–343 (DLLAADFMGQKMQRSIKLQ) are Cytoplasmic-facing. The chain crosses the membrane as a helical span at residues 344–364 (LKSYAAVLLGAGGMSVMAKWA).

The protein belongs to the ZIP transporter (TC 2.A.5) family.

The protein resides in the cell membrane. Its function is as follows. Probably mediates zinc uptake from the rhizosphere. The chain is Probable zinc transporter 10 (ZIP10) from Arabidopsis thaliana (Mouse-ear cress).